A 270-amino-acid chain; its full sequence is Formamidopyrimidine-DNA glycosylase (270 aa).

Pro-2 (schiff-base intermediate with DNA) is an active-site residue. Glu-3 serves as the catalytic Proton donor. The Proton donor; for beta-elimination activity role is filled by Lys-57. His-90, Arg-109, and Lys-150 together coordinate DNA. Residues 235-269 (LVYGNKDKPCPRCGTKIKSIIIGQRNSFFCPQCQK) form an FPG-type zinc finger. Catalysis depends on Arg-259, which acts as the Proton donor; for delta-elimination activity.

The protein belongs to the FPG family. Monomer. Zn(2+) serves as cofactor.

It carries out the reaction Hydrolysis of DNA containing ring-opened 7-methylguanine residues, releasing 2,6-diamino-4-hydroxy-5-(N-methyl)formamidopyrimidine.. The enzyme catalyses 2'-deoxyribonucleotide-(2'-deoxyribose 5'-phosphate)-2'-deoxyribonucleotide-DNA = a 3'-end 2'-deoxyribonucleotide-(2,3-dehydro-2,3-deoxyribose 5'-phosphate)-DNA + a 5'-end 5'-phospho-2'-deoxyribonucleoside-DNA + H(+). Its function is as follows. Involved in base excision repair of DNA damaged by oxidation or by mutagenic agents. Acts as a DNA glycosylase that recognizes and removes damaged bases. Has a preference for oxidized purines, such as 7,8-dihydro-8-oxoguanine (8-oxoG). Has AP (apurinic/apyrimidinic) lyase activity and introduces nicks in the DNA strand. Cleaves the DNA backbone by beta-delta elimination to generate a single-strand break at the site of the removed base with both 3'- and 5'-phosphates. This Histophilus somni (strain 129Pt) (Haemophilus somnus) protein is Formamidopyrimidine-DNA glycosylase.